The primary structure comprises 611 residues: ATP-dependent zinc metalloprotease FtsH (611 aa).

Residue Met-1 is a topological domain, cytoplasmic. Residues 2–22 (VKNLIFWLVITVVLMSIFQNF) traverse the membrane as a helical segment. Residues 23-98 (NTNDVNNHKV…IGAIPEEPSL (76 aa)) are Extracellular-facing. The chain crosses the membrane as a helical span at residues 99 to 119 (FISILISWFPMLLLIGVWIFF). The Cytoplasmic portion of the chain corresponds to 120 to 611 (MRQMQMGGGK…KGWIETDTNK (492 aa)). 192–199 (GPPGTGKT) lines the ATP pocket. Position 414 (His-414) interacts with Zn(2+). The active site involves Glu-415. Zn(2+)-binding residues include His-418 and Asp-492.

The protein in the central section; belongs to the AAA ATPase family. It in the C-terminal section; belongs to the peptidase M41 family. In terms of assembly, homohexamer. Zn(2+) serves as cofactor.

The protein resides in the cell membrane. Functionally, acts as a processive, ATP-dependent zinc metallopeptidase for both cytoplasmic and membrane proteins. Plays a role in the quality control of integral membrane proteins. The protein is ATP-dependent zinc metalloprotease FtsH of Buchnera aphidicola subsp. Acyrthosiphon pisum (strain APS) (Acyrthosiphon pisum symbiotic bacterium).